We begin with the raw amino-acid sequence, 448 residues long: Vimentin (448 aa).

The head stretch occupies residues 1-77 (PRHLEPAGSN…FSLADAINTE (77 aa)). Ser9 bears the Phosphoserine mark. Residue Thr16 is glycosylated (O-linked (GlcNAc) threonine). Ser17 bears the Phosphoserine; by PKC; alternate mark. Ser17 carries O-linked (GlcNAc) serine; alternate glycosylation. Residue Ser22 is modified to Phosphoserine; by CaMK2, PKA, PKC and ROCK2. Phosphoserine occurs at positions 29, 31, and 33. A Phosphotyrosine modification is found at Tyr35. Ser37 carries the phosphoserine modification. Position 38 is a phosphoserine; by CDK5 and CDK1 (Ser38). A Phosphotyrosine modification is found at Tyr43. Ser48 bears the Phosphoserine; by PKA and PKC mark. Ser54 bears the Phosphoserine; by AURKB and ROCK2 mark. A Phosphoserine modification is found at Ser55. The residue at position 65 (Ser65) is a Phosphoserine; by CaMK2. Ser69 bears the Phosphoserine mark. Residues 78–113 (FKNTRTNEKVELQELNDRFADYIDKVRFLEQQNKIL) form a coil 1A region. Residues 78–113 (FKNTRTNEKVELQELNDRFADYIDKVRFLEQQNKIL) are a coiled coil. Residues 85-393 (EKVELQELND…KLLEGEESRI (309 aa)) form the IF rod domain. Lys86 participates in a covalent cross-link: Glycyl lysine isopeptide (Lys-Gly) (interchain with G-Cter in SUMO2). Phosphotyrosine is present on Tyr99. Lys102, Lys111, and Lys121 each carry N6-acetyllysine; alternate. N6-succinyllysine; alternate occurs at positions 102 and 111. Glycyl lysine isopeptide (Lys-Gly) (interchain with G-Cter in SUMO2); alternate cross-links involve residues Lys102, Lys111, and Lys121. A linker 1 region spans residues 114–135 (LAELEQLKGQGKSRLGDLYEEE). Ser126 bears the Phosphoserine mark. Residues 136–227 (MRELRRQVDQ…KLHDEEIQEL (92 aa)) adopt a coiled-coil conformation. A coil 1B region spans residues 136-227 (MRELRRQVDQ…KLHDEEIQEL (92 aa)). Lys150 is subject to N6-acetyllysine. Lys170 bears the N6-acetyllysine; alternate mark. An N6-succinyllysine; alternate modification is found at Lys170. Phosphoserine is present on Ser196. The residue at position 205 (Lys205) is an N6-acetyllysine; alternate. Lys205 is covalently cross-linked (Glycyl lysine isopeptide (Lys-Gly) (interchain with G-Cter in SUMO2); alternate). At Ser208 the chain carries Phosphoserine. N6-acetyllysine is present on Lys217. A linker 12 region spans residues 228–250 (QAQIQEQHVQIDVDVSKPDLTAA). A Glycyl lysine isopeptide (Lys-Gly) (interchain with G-Cter in SUMO2) cross-link involves residue Lys244. The segment at 251-389 (LRDVRQQYES…ATYRKLLEGE (139 aa)) is coil 2. Lys276 carries the N6-acetyllysine; alternate modification. Lys276 is modified (N6-succinyllysine; alternate). Lys276 participates in a covalent cross-link: Glycyl lysine isopeptide (Lys-Gly) (interchain with G-Cter in SUMO2); alternate. Ser281 is modified (phosphoserine). Positions 285–389 (NRNNDALRQA…ATYRKLLEGE (105 aa)) form a coiled coil. Lys295 participates in a covalent cross-link: Glycyl lysine isopeptide (Lys-Gly) (interchain with G-Cter in SUMO2). Position 307 is a phosphoserine (Ser307). The short motif at 308–311 (LTCE) is the [IL]-x-C-x-x-[DE] motif element. Lys355 is modified (N6-acetyllysine; alternate). Lys355 participates in a covalent cross-link: Glycyl lysine isopeptide (Lys-Gly) (interchain with G-Cter in SUMO2); alternate. Residues 390-448 (ESRISLPLPNFSSLNLRETNLESLPLVDTHSKRTLLIKTVETRDGQVINETSQHHDDLE) are tail. Phosphoserine is present on residues Ser391, Ser394, Ser401, and Ser402. The residue at position 408 (Thr408) is a Phosphothreonine. Ser412 bears the Phosphoserine mark. Thr418 is subject to Phosphothreonine. Phosphoserine is present on Ser420. A Glycyl lysine isopeptide (Lys-Gly) (interchain with G-Cter in SUMO2) cross-link involves residue Lys421. At Lys427 the chain carries N6-acetyllysine; alternate. Residue Lys427 is modified to N6-succinyllysine; alternate. Lys427 participates in a covalent cross-link: Glycyl lysine isopeptide (Lys-Gly) (interchain with G-Cter in SUMO2); alternate. Residue Lys427 forms a Glycyl lysine isopeptide (Lys-Gly) (interchain with G-Cter in SUMO1); alternate linkage. Thr428 and Thr440 each carry phosphothreonine. Position 441 is a phosphoserine (Ser441).

Belongs to the intermediate filament family. Homomer assembled from elementary dimers. Identified in complexes that contain VIM, EZR, AHNAK, BFSP1, BFSP2, ANK2, PLEC, PRX and spectrin. Interacts with BCAS3. Interacts with LGSN. Interacts with SYNM. Interacts (via rod region) with PLEC (via CH 1 domain). Interacts with STK33. Interacts with LARP6. Interacts with RAB8B. Interacts with TOR1A; the interaction associates TOR1A with the cytoskeleton. Interacts with TOR1AIP1. Interacts with TOR1AIP1. Interacts with DIAPH1. Interacts with EPPK1; interaction is dependent of higher-order structure of intermediate filament. Interacts with the non-receptor tyrosine kinase SRMS; the interaction leads to phosphorylation of VIM. Interacts with NOD2. Interacts (via head region) with CORO1C. Interacts with HDGF. Interacts with PRKCE (via phorbol-ester/DAG-type 2 domain). Interacts with BFSP2. Interacts with PPL. Interacts with PKP1 and PKP2. Interacts with SCRIB (via PDZ domains); the interaction protects SCRIB from proteasomal degradation and facilitates SCRIB localization to intermediate filaments, the interaction is reduced by cell contact inhibition. In terms of processing, one of the most prominent phosphoproteins in various cells of mesenchymal origin. Phosphorylation is enhanced during cell division, at which time vimentin filaments are significantly reorganized. Phosphorylation by PKN1 inhibits the formation of filaments. Filament disassembly during mitosis is promoted by phosphorylation at Ser-37 as well as by nestin. Phosphorylated at Ser-38 by CDK5 during neutrophil secretion in the cytoplasm. Phosphorylated by STK33. Phosphorylated on tyrosine residues by SRMS. Post-translationally, S-nitrosylation is induced by interferon-gamma and oxidatively-modified low-densitity lipoprotein (LDL(ox)) possibly implicating the iNOS-S100A8/9 transnitrosylase complex.

It is found in the cytoplasm. It localises to the cytoskeleton. The protein resides in the nucleus matrix. The protein localises to the cell membrane. Vimentins are class-III intermediate filaments found in various non-epithelial cells, especially mesenchymal cells. Vimentin is attached to the nucleus, endoplasmic reticulum, and mitochondria, either laterally or terminally. Plays a role in cell directional movement, orientation, cell sheet organization and Golgi complex polarization at the cell migration front. Protects SCRIB from proteasomal degradation and facilitates its localization to intermediate filaments in a cell contact-mediated manner. Functionally, involved with LARP6 in the stabilization of type I collagen mRNAs for CO1A1 and CO1A2. The sequence is that of Vimentin (VIM) from Cricetulus griseus (Chinese hamster).